A 479-amino-acid polypeptide reads, in one-letter code: Transmembrane protein 161A (479 aa).

An N-terminal signal peptide occupies residues 1–28 (MAVLGVQLVVTLLTATLMHRLAPHCSFA). At 29–98 (RWLLCNGSLF…LTTVDALVLR (70 aa)) the chain is on the extracellular side. Residue N34 is glycosylated (N-linked (GlcNAc...) asparagine). S69 is modified (phosphoserine). Residues 99 to 119 (FFLEYQWFVDFAVYSGGVYLF) traverse the membrane as a helical segment. Topologically, residues 120–134 (TEAYYYMLGPAKETN) are cytoplasmic. A helical membrane pass occupies residues 135–155 (IAVFWCLLTVTFSIKMFLTVT). At 156-166 (RLYFSAEEGGE) the chain is on the extracellular side. The helical transmembrane segment at 167-187 (RSVCLTFAFLFLLLAMLVQVV) threads the bilayer. Topologically, residues 188-224 (REETLELGLEPGLASMTQNLEPLLKKQGWDWALPVAK) are cytoplasmic. The chain crosses the membrane as a helical span at residues 225 to 245 (LAIRVGLAVVGSVLGAFLTFP). Topologically, residues 246–263 (GLRLAQTHRDALTMSEDR) are extracellular. A helical transmembrane segment spans residues 264–284 (PMLQFLLHTSFLSPLFILWLW). At 285 to 304 (TKPIARDFLHQPPFGETRFS) the chain is on the cytoplasmic side. The helical transmembrane segment at 305-325 (LLSDSAFDSGRLWLLVVLCLL) threads the bilayer. Residues 326–370 (RLAVTRPHLQAYLCLAKARVEQLRREAGRIEAREIQQRVVRVYCY) lie on the Extracellular side of the membrane. Residues 371 to 391 (VTVVSLQYLTPLILTLNCTLL) traverse the membrane as a helical segment. Residues 392 to 449 (LKTLGGYSWGLGPAPLLSPDPSSASAAPIGSGEDEVQQTAARIAGALGGLLTPLFLRG) are Cytoplasmic-facing. Residues 450-470 (VLAYLIWWTAACQLLASLFGL) traverse the membrane as a helical segment. The Extracellular segment spans residues 471–479 (YFHQHLAGS).

This sequence belongs to the TMEM161 family.

It localises to the membrane. Functionally, may play a role in protection against oxidative stress. Overexpression leads to reduced levels of oxidant-induced DNA damage and apoptosis. This Homo sapiens (Human) protein is Transmembrane protein 161A (TMEM161A).